Reading from the N-terminus, the 213-residue chain is MLTIAVSKGRIYQEALPLLAEAGIVPSVDPDKSRKLILPTERDDVQLVIIRAADVPTYVEYGAADLGIAGKDVLVEYEGEGLYEPLDLGIARCRLMTAGPPGRPVASRRLRVATKYVNTAKRFFARRGVQAEVIKLYGSMELAPLVGLADCIVDLVDTGNTLRANGLAPQELIMDISSRLVVNKAAMKMKYGPITELAGHLARIVSARAARER.

The protein belongs to the ATP phosphoribosyltransferase family. Short subfamily. In terms of assembly, heteromultimer composed of HisG and HisZ subunits.

It localises to the cytoplasm. It catalyses the reaction 1-(5-phospho-beta-D-ribosyl)-ATP + diphosphate = 5-phospho-alpha-D-ribose 1-diphosphate + ATP. Its pathway is amino-acid biosynthesis; L-histidine biosynthesis; L-histidine from 5-phospho-alpha-D-ribose 1-diphosphate: step 1/9. Catalyzes the condensation of ATP and 5-phosphoribose 1-diphosphate to form N'-(5'-phosphoribosyl)-ATP (PR-ATP). Has a crucial role in the pathway because the rate of histidine biosynthesis seems to be controlled primarily by regulation of HisG enzymatic activity. The chain is ATP phosphoribosyltransferase from Methylococcus capsulatus (strain ATCC 33009 / NCIMB 11132 / Bath).